The chain runs to 393 residues: Putative bacilysin exporter BacE (393 aa).

Helical transmembrane passes span 11–31 (LLFGQALSFMGDYCVLPALLI), 43–63 (SGVIAVRSIPMVFQPFLGVLV), 69–89 (VKIMLWTDVIRGVIFLGLTFL), 92–112 (GEYPLLFLALLFVSYGSGVFF), 133–155 (LFAKATTISIIVGAAAGGLFLLG), 160–177 (LAVAFNGVTYLVSAFFIS), 215–235 (MFTMITMALLWGVVYSYFPIV), 244–264 (IGNFLLTFCIGFGGFIGAALV), 287–307 (ALFLFTPIFAVSVIAAILFFI), and 353–373 (IVDAAVIMAFIVLLVSGLFLH).

The protein belongs to the major facilitator superfamily.

The protein localises to the cell membrane. Part of the bacilysin biosynthesis operon. May be involved in self-resistance to bacilysin by permitting efflux of this antibiotic. The chain is Putative bacilysin exporter BacE (bacE) from Bacillus amyloliquefaciens (Bacillus velezensis).